Consider the following 189-residue polypeptide: Probable nicotinate-nucleotide adenylyltransferase (189 aa).

Belongs to the NadD family.

The enzyme catalyses nicotinate beta-D-ribonucleotide + ATP + H(+) = deamido-NAD(+) + diphosphate. The protein operates within cofactor biosynthesis; NAD(+) biosynthesis; deamido-NAD(+) from nicotinate D-ribonucleotide: step 1/1. In terms of biological role, catalyzes the reversible adenylation of nicotinate mononucleotide (NaMN) to nicotinic acid adenine dinucleotide (NaAD). In Hydrogenobaculum sp. (strain Y04AAS1), this protein is Probable nicotinate-nucleotide adenylyltransferase.